A 798-amino-acid polypeptide reads, in one-letter code: Bromodomain-containing protein 2 (798 aa).

N-acetylmethionine is present on methionine 1. The interval 1–21 (MLQNVTPHKLPGEGNAGLLGL) is disordered. Phosphothreonine is present on threonine 6. Phosphoserine is present on serine 36. The tract at residues 53–72 (LQLAPANPPPPEVSNPKKPG) is disordered. The Bromo 1 domain occupies 73-179 (RVTNQLQYLH…KIFLQKVASM (107 aa)). A protein contacts are provided by aspartate 111, tyrosine 154, asparagine 155, lysine 156, aspartate 159, and aspartate 160. 3 disordered regions span residues 267-348 (PPAQ…LSEQ), 455-648 (EPLE…KRQL), and 735-798 (EKRL…SDSG). A compositionally biased stretch (low complexity) spans 284-297 (TTTPTPTAILAPGS). Serine 297, serine 300, and serine 304 each carry phosphoserine. A compositionally biased stretch (basic and acidic residues) spans 315–331 (MRRESGRPIKPPRKDLP). The region spanning 343-452 (GKLSEQLKHC…DVFEFRYAKM (110 aa)) is the Bromo 2 domain. The segment covering 480 to 512 (SSEESSSESSSEEEEEEDEEDEEEESESSDSEE) has biased composition (acidic residues). Residues 542 to 564 (KPKRKREKKEKKKKRKAEKHRGR) show a composition bias toward basic residues. Residues 553–557 (KKKRK) carry the Nuclear localization signal motif. The NET domain occupies 630-712 (DSEEEEESRP…SCLRKKPRKP (83 aa)). Residue serine 631 is modified to Phosphoserine. Residues 637 to 648 (SRPMSYDEKRQL) are compositionally biased toward basic and acidic residues. Residues 772–792 (SASSSSSDSSSSSSSSSSSDT) are compositionally biased toward low complexity.

This sequence belongs to the BET family. As to quaternary structure, homodimer. Interacts with E2F1. Interacts with (acetylated) STAT3; promoting STAT3 recruitment to chromatin. Interacts with CTCF; promoting BRD2 recruitment to chromatin.

It localises to the nucleus. The protein localises to the chromosome. Functionally, chromatin reader protein that specifically recognizes and binds histone H4 acetylated at 'Lys-5' and 'Lys-12' (H4K5ac and H4K12ac, respectively), thereby controlling gene expression and remodeling chromatin structures. Recruits transcription factors and coactivators to target gene sites, and activates RNA polymerase II machinery for transcriptional elongation. Plays a key role in genome compartmentalization via its association with CTCF and cohesin: recruited to chromatin by CTCF and promotes formation of topologically associating domains (TADs) via its ability to bind acetylated histones, contributing to CTCF boundary formation and enhancer insulation. Also recognizes and binds acetylated non-histone proteins, such as STAT3. Involved in inflammatory response by regulating differentiation of naive CD4(+) T-cells into T-helper Th17: recognizes and binds STAT3 acetylated at 'Lys-87', promoting STAT3 recruitment to chromatin. In addition to acetylated lysines, also recognizes and binds lysine residues on histones that are both methylated and acetylated on the same side chain to form N6-acetyl-N6-methyllysine (Kacme), an epigenetic mark of active chromatin associated with increased transcriptional initiation. Specifically binds histone H4 acetyl-methylated at 'Lys-5' and 'Lys-12' (H4K5acme and H4K12acme, respectively). The chain is Bromodomain-containing protein 2 (Brd2) from Rattus norvegicus (Rat).